The chain runs to 467 residues: Peroxisome proliferator-activated receptor alpha (467 aa).

Residues asparagine 99 to phenylalanine 173 constitute a DNA-binding region (nuclear receptor). 2 NR C4-type zinc fingers span residues cysteine 102–cysteine 122 and cysteine 139–cysteine 161. The NR LBD domain maps to phenylalanine 239 to methionine 466. The segment at aspartate 304–leucine 433 is required for heterodimerization with RXRA.

The protein belongs to the nuclear hormone receptor family. NR1 subfamily. As to quaternary structure, heterodimer; with RXRA. This heterodimerization is required for DNA binding and transactivation activity. Interacts with NCOA3 coactivator. Interacts with CITED2; the interaction stimulates its transcriptional activity. Also interacts with PPARBP in vitro. Interacts with AKAP13, LPIN1, PRDM16 and coactivator NCOA6. Interacts with ASXL1 and ASXL2. Interacts with PER2. Interacts with SIRT1; the interaction seems to be modulated by NAD(+) levels. Interacts with CRY1 and CRY2. In hepatocytes, interacts with PAQR3 and HUWE1; the interactions promote PPARA poylubiquitination and HUWE1-mediated degradation. Post-translationally, ubiquitinated by E3 ubiquitin-protein ligase HUWE1; leading to proteasomal degradation. Phosphorylated.

It localises to the nucleus. Functionally, ligand-activated transcription factor. Key regulator of lipid metabolism. Activated by the endogenous ligand 1-palmitoyl-2-oleoyl-sn-glycerol-3-phosphocholine (16:0/18:1-GPC). Activated by oleylethanolamide, a naturally occurring lipid that regulates satiety. Receptor for peroxisome proliferators such as hypolipidemic drugs and fatty acids. Regulates the peroxisomal beta-oxidation pathway of fatty acids. Functions as a transcription activator for the ACOX1 and P450 genes. Transactivation activity requires heterodimerization with RXRA and is antagonized by NR2C2. May be required for the propagation of clock information to metabolic pathways regulated by PER2. The chain is Peroxisome proliferator-activated receptor alpha (PPARA) from Cavia porcellus (Guinea pig).